Reading from the N-terminus, the 233-residue chain is Adenylyl cyclase-associated protein 1 (233 aa).

Tyrosine 14 is subject to Phosphotyrosine. Serine 17 is subject to Phosphoserine. Disordered regions lie at residues 43–71 (VDKX…PSAL) and 91–129 (DEKT…KPVT). A compositionally biased stretch (low complexity) spans 53–64 (LSGLPSGPSAGS). At lysine 101 the chain carries N6-methyllysine. Phosphoserine occurs at positions 104, 115, 122, and 124. Lysine 151 participates in a covalent cross-link: Glycyl lysine isopeptide (Lys-Gly) (interchain with G-Cter in SUMO1). Residues 173–221 (VPXISINKXDGRHIYLSKNSLDCEIVSAKSSEMNVLIPTEGGDFNEFPV) form the C-CAP/cofactor C-like domain.

It belongs to the CAP family. In terms of assembly, homodimer. Binds actin monomers.

It is found in the cell membrane. In terms of biological role, directly regulates filament dynamics and has been implicated in a number of complex developmental and morphological processes, including mRNA localization and the establishment of cell polarity. This chain is Adenylyl cyclase-associated protein 1 (CAP1), found in Sus scrofa (Pig).